The sequence spans 258 residues: MAKRIETKDLDIYYGSFHAVESVNLIVEPRTVTAFIGPSGCGKSTVLRTLNRMHEVIPGAYCTGKVELDGVDLYGKGVDPVAVRRNVGMVFQRANPFPAMSIRDNVVAGLKLNGVRDNKLLDEACEKSLRGANLWDEVKDRLERSGASLSGGQQQRLCIARAIAVEPEVLLMDEPCSALDPISTLAIEDLVSELKERFTVVIVTHNMQQAARVSDQTAFFNLKAQGEPGRLVEIDTTERIFSNPKEKATEDYISGRFG.

Residues 5 to 247 form the ABC transporter domain; sequence IETKDLDIYY…ERIFSNPKEK (243 aa). 37-44 is a binding site for ATP; sequence GPSGCGKS.

The protein belongs to the ABC transporter superfamily. Phosphate importer (TC 3.A.1.7) family. In terms of assembly, the complex is composed of two ATP-binding proteins (PstB), two transmembrane proteins (PstC and PstA) and a solute-binding protein (PstS).

It is found in the cell membrane. The enzyme catalyses phosphate(out) + ATP + H2O = ADP + 2 phosphate(in) + H(+). Its function is as follows. Part of the ABC transporter complex PstSACB involved in phosphate import. Responsible for energy coupling to the transport system. The chain is Phosphate import ATP-binding protein PstB from Cutibacterium acnes (strain DSM 16379 / KPA171202) (Propionibacterium acnes).